We begin with the raw amino-acid sequence, 154 residues long: 6,7-dimethyl-8-ribityllumazine synthase (154 aa).

5-amino-6-(D-ribitylamino)uracil is bound by residues Phe22, 56-58 (SFE), and 81-83 (VLI). 86–87 (ET) contributes to the (2S)-2-hydroxy-3-oxobutyl phosphate binding site. His89 serves as the catalytic Proton donor. Phe114 is a binding site for 5-amino-6-(D-ribitylamino)uracil. Residue Arg128 coordinates (2S)-2-hydroxy-3-oxobutyl phosphate.

Belongs to the DMRL synthase family.

It catalyses the reaction (2S)-2-hydroxy-3-oxobutyl phosphate + 5-amino-6-(D-ribitylamino)uracil = 6,7-dimethyl-8-(1-D-ribityl)lumazine + phosphate + 2 H2O + H(+). Its pathway is cofactor biosynthesis; riboflavin biosynthesis; riboflavin from 2-hydroxy-3-oxobutyl phosphate and 5-amino-6-(D-ribitylamino)uracil: step 1/2. Its function is as follows. Catalyzes the formation of 6,7-dimethyl-8-ribityllumazine by condensation of 5-amino-6-(D-ribitylamino)uracil with 3,4-dihydroxy-2-butanone 4-phosphate. This is the penultimate step in the biosynthesis of riboflavin. This is 6,7-dimethyl-8-ribityllumazine synthase from Chlamydia felis (strain Fe/C-56) (Chlamydophila felis).